We begin with the raw amino-acid sequence, 831 residues long: Replication restart protein PriA (831 aa).

In terms of domain architecture, Helicase ATP-binding spans 304 to 471 (VLPLQGYHQV…HRHQNDPQRH (168 aa)). ATP is bound at residue 317 to 324 (GVTGSGKT). A DEAH box motif is present at residues 413-416 (DEEH). Zn(2+) is bound by residues Cys537, Cys540, Cys546, Cys549, Cys568, Cys571, Cys581, and Cys584. The 161-residue stretch at 575–735 (EIQPKVCPEC…ELPQREMLNY (161 aa)) folds into the Helicase C-terminal domain.

This sequence belongs to the helicase family. PriA subfamily. In terms of assembly, component of the replication restart primosome. The cofactor is Zn(2+).

The catalysed reaction is Couples ATP hydrolysis with the unwinding of duplex DNA by translocating in the 3'-5' direction.. The enzyme catalyses ATP + H2O = ADP + phosphate + H(+). In terms of biological role, initiates the restart of stalled replication forks, which reloads the replicative helicase on sites other than the origin of replication. Recognizes and binds to abandoned replication forks and remodels them to uncover a helicase loading site. Promotes assembly of the primosome at these replication forks. The chain is Replication restart protein PriA from Synechocystis sp. (strain ATCC 27184 / PCC 6803 / Kazusa).